Here is a 234-residue protein sequence, read N- to C-terminus: uncharacterized protein (234 aa).

Over residues 1–12 the composition is skewed to low complexity; that stretch reads MGSSSSSSLNNS. Residues 1–184 are disordered; sequence MGSSSSSSLN…TPYLSGANSR (184 aa). 2 stretches are compositionally biased toward polar residues: residues 21-40 and 52-64; these read TPES…SILS and KSTS…NLTP. Residues 66-77 are compositionally biased toward low complexity; that stretch reads KSRWSFSSSKKS. The segment covering 105–120 has biased composition (polar residues); it reads GDFTPSLGNTPKSSFS. The span at 152–167 shows a compositional bias: basic and acidic residues; that stretch reads LGELFRDSIREEREES.

In terms of assembly, interacts with RLK902. In terms of tissue distribution, expressed in stems, rosette leaves and roots and weakly in inflorescences.

This is an uncharacterized protein from Arabidopsis thaliana (Mouse-ear cress).